A 162-amino-acid polypeptide reads, in one-letter code: Shikimate kinase (162 aa).

11–16 (GSGKSS) contributes to the ATP binding site. Position 15 (S15) interacts with Mg(2+). 3 residues coordinate substrate: D33, R57, and G80. An ATP-binding site is contributed by R116. R132 is a substrate binding site.

The protein belongs to the shikimate kinase family. As to quaternary structure, monomer. Requires Mg(2+) as cofactor.

It localises to the cytoplasm. It catalyses the reaction shikimate + ATP = 3-phosphoshikimate + ADP + H(+). It participates in metabolic intermediate biosynthesis; chorismate biosynthesis; chorismate from D-erythrose 4-phosphate and phosphoenolpyruvate: step 5/7. Its function is as follows. Catalyzes the specific phosphorylation of the 3-hydroxyl group of shikimic acid using ATP as a cosubstrate. The polypeptide is Shikimate kinase (Helicobacter pylori (strain J99 / ATCC 700824) (Campylobacter pylori J99)).